Consider the following 383-residue polypeptide: Acetylornithine deacetylase (383 aa).

Residue histidine 80 participates in Zn(2+) binding. The active site involves aspartate 82. Residue aspartate 112 coordinates Zn(2+). Glutamate 144 is an active-site residue. The Zn(2+) site is built by glutamate 145, glutamate 169, and histidine 355.

The protein belongs to the peptidase M20A family. ArgE subfamily. In terms of assembly, homodimer. The cofactor is Zn(2+). Requires Co(2+) as cofactor. Glutathione is required as a cofactor.

The protein resides in the cytoplasm. It catalyses the reaction N(2)-acetyl-L-ornithine + H2O = L-ornithine + acetate. Its pathway is amino-acid biosynthesis; L-arginine biosynthesis; L-ornithine from N(2)-acetyl-L-ornithine (linear): step 1/1. Catalyzes the hydrolysis of the amide bond of N(2)-acetylated L-amino acids. Cleaves the acetyl group from N-acetyl-L-ornithine to form L-ornithine, an intermediate in L-arginine biosynthesis pathway, and a branchpoint in the synthesis of polyamines. This is Acetylornithine deacetylase from Salmonella typhi.